The primary structure comprises 146 residues: Small ribosomal subunit protein eS17 (146 aa).

It belongs to the eukaryotic ribosomal protein eS17 family. In terms of assembly, component of the small ribosomal subunit (SSU). Mature N.crassa ribosomes consist of a small (40S) and a large (60S) subunit. The 40S small subunit contains 1 molecule of ribosomal RNA (18S rRNA) and at least 32 different proteins. The large 60S subunit contains 3 rRNA molecules (26S, 5.8S and 5S rRNA) and at least 42 different proteins.

Its subcellular location is the cytoplasm. Component of the ribosome, a large ribonucleoprotein complex responsible for the synthesis of proteins in the cell. The small ribosomal subunit (SSU) binds messenger RNAs (mRNAs) and translates the encoded message by selecting cognate aminoacyl-transfer RNA (tRNA) molecules. The large subunit (LSU) contains the ribosomal catalytic site termed the peptidyl transferase center (PTC), which catalyzes the formation of peptide bonds, thereby polymerizing the amino acids delivered by tRNAs into a polypeptide chain. The nascent polypeptides leave the ribosome through a tunnel in the LSU and interact with protein factors that function in enzymatic processing, targeting, and the membrane insertion of nascent chains at the exit of the ribosomal tunnel. The chain is Small ribosomal subunit protein eS17 (rps-17) from Neurospora crassa (strain ATCC 24698 / 74-OR23-1A / CBS 708.71 / DSM 1257 / FGSC 987).